The following is a 186-amino-acid chain: Adenylate kinase (186 aa).

14-19 (GAGKGT) is a binding site for ATP. An NMP region spans residues 34–63 (STGDILRDHVARGTPLGERVRPIMERGDLV). AMP contacts are provided by residues T35, R40, 61–63 (DLV), 84–87 (GFPR), and Q91. The segment at 125 to 135 (RRAELEGRSDD) is LID. R126 provides a ligand contact to ATP. Positions 132 and 143 each coordinate AMP. Residue G171 participates in ATP binding.

This sequence belongs to the adenylate kinase family. Monomer.

The protein resides in the cytoplasm. The enzyme catalyses AMP + ATP = 2 ADP. Its pathway is purine metabolism; AMP biosynthesis via salvage pathway; AMP from ADP: step 1/1. Functionally, catalyzes the reversible transfer of the terminal phosphate group between ATP and AMP. Plays an important role in cellular energy homeostasis and in adenine nucleotide metabolism. This is Adenylate kinase from Thermus thermophilus (strain ATCC BAA-163 / DSM 7039 / HB27).